The sequence spans 579 residues: Glucose starvation modulator protein 1 (579 aa).

Positions 20 to 48 form a DNA-binding region, zn(2)-C6 fungal-type; the sequence is CVFCHEKHLQCDLGRPCQNCSKRGIGDTC. Basic and acidic residues predominate over residues 43–53; sequence GIGDTCRDKER. Disordered stretches follow at residues 43–75 and 319–342; these read GIGD…STKS and QMAS…GETV. The span at 54 to 64 shows a compositional bias: basic residues; the sequence is KPRKRGPRKVK. Residues 330–339 show a composition bias toward polar residues; it reads NDTSPESQGG. Residues 444–516 form the PAS domain; it reads LLEYESMAKL…DIFHEYLAFG (73 aa).

It belongs to the ERT1/acuK family.

Its subcellular location is the nucleus. In terms of biological role, transcription factor which regulates nonfermentable carbon utilization. This Kluyveromyces lactis (strain ATCC 8585 / CBS 2359 / DSM 70799 / NBRC 1267 / NRRL Y-1140 / WM37) (Yeast) protein is Glucose starvation modulator protein 1 (GSM1).